Consider the following 306-residue polypeptide: Pentalenolactone F synthase (306 aa).

Fe cation is bound by residues His-110 and Asp-112. 2 residues coordinate 2-oxoglutarate: Thr-138 and Trp-258. His-273 is a binding site for Fe cation. Position 284 (Arg-284) interacts with 2-oxoglutarate.

The protein belongs to the TfdA dioxygenase family. It depends on Fe(2+) as a cofactor.

It carries out the reaction pentalenolactone D + 2 2-oxoglutarate + 2 O2 = pentalenolactone F + 2 succinate + 2 CO2 + H2O. The protein operates within antibiotic biosynthesis; neopentalenolactone biosynthesis. Its activity is regulated as follows. Activated by ascorbate. In terms of biological role, catalyzes the Fe(2+) and alpha-ketoglutarate-dependent oxidation of pentalenolactone D to pentalenolactone F. Also able to catalyze the oxidation of pentalenolactone D to pentalenolactone E. In presence of neopentalenolactone D, mediates production of PL308 and possibly neopentalenolactone E. This is Pentalenolactone F synthase (ptlD) from Streptomyces avermitilis (strain ATCC 31267 / DSM 46492 / JCM 5070 / NBRC 14893 / NCIMB 12804 / NRRL 8165 / MA-4680).